Here is a 349-residue protein sequence, read N- to C-terminus: Sensory histidine kinase/phosphatase NtrB (349 aa).

Positions 5–78 (IQPDAGQILN…SLAAGQGFTD (74 aa)) constitute a PAS domain. Residues 136–349 (GLAHEIKNPL…EFSVYLPIRK (214 aa)) enclose the Histidine kinase domain. Position 139 is a phosphohistidine; by autocatalysis (histidine 139). Lysine 329 serves as a coordination point for ATP.

Autophosphorylated.

It localises to the cytoplasm. It carries out the reaction ATP + protein L-histidine = ADP + protein N-phospho-L-histidine.. Member of the two-component regulatory system NtrB/NtrC, which controls expression of the nitrogen-regulated (ntr) genes in response to nitrogen limitation. Under conditions of nitrogen limitation, NtrB autophosphorylates and transfers the phosphoryl group to NtrC. In the presence of nitrogen, acts as a phosphatase that dephosphorylates and inactivates NtrC. This Salmonella typhi protein is Sensory histidine kinase/phosphatase NtrB (glnL).